Reading from the N-terminus, the 381-residue chain is Stearoyl-[acyl-carrier-protein] 9-desaturase 1, chloroplastic (381 aa).

The transit peptide at 1-26 (MQVVGTVRVSGCGAVVAPSRRQCRVS) directs the protein to the chloroplast. Fe cation is bound by residues glutamate 120, glutamate 158, histidine 161, glutamate 211, glutamate 244, and histidine 247.

Belongs to the fatty acid desaturase type 2 family. As to quaternary structure, homodimer. It depends on Fe(2+) as a cofactor.

Its subcellular location is the plastid. The protein resides in the chloroplast. The catalysed reaction is octadecanoyl-[ACP] + 2 reduced [2Fe-2S]-[ferredoxin] + O2 + 2 H(+) = (9Z)-octadecenoyl-[ACP] + 2 oxidized [2Fe-2S]-[ferredoxin] + 2 H2O. The protein operates within lipid metabolism; fatty acid metabolism. Functionally, converts stearoyl-ACP to oleoyl-ACP by introduction of a cis double bond between carbons 9 and 10 of the acyl chain. The protein is Stearoyl-[acyl-carrier-protein] 9-desaturase 1, chloroplastic of Oryza sativa subsp. indica (Rice).